The primary structure comprises 360 residues: uncharacterized protein (360 aa).

Residues lysine 11–glutamate 40 form the 4Fe-4S ferredoxin-type domain.

The protein belongs to the FrhB family.

This is an uncharacterized protein from Methanocaldococcus jannaschii (strain ATCC 43067 / DSM 2661 / JAL-1 / JCM 10045 / NBRC 100440) (Methanococcus jannaschii).